Here is a 296-residue protein sequence, read N- to C-terminus: UDP-N-acetylenolpyruvoylglucosamine reductase (296 aa).

In terms of domain architecture, FAD-binding PCMH-type spans 19–203 (KVGGFAEYFS…LETTQKNLKK (185 aa)). The active site involves Arg166. Residue Ser217 is the Proton donor of the active site. Residue Glu287 is part of the active site.

This sequence belongs to the MurB family. Requires FAD as cofactor.

The protein resides in the cytoplasm. It catalyses the reaction UDP-N-acetyl-alpha-D-muramate + NADP(+) = UDP-N-acetyl-3-O-(1-carboxyvinyl)-alpha-D-glucosamine + NADPH + H(+). It participates in cell wall biogenesis; peptidoglycan biosynthesis. Its function is as follows. Cell wall formation. This Prochlorococcus marinus subsp. pastoris (strain CCMP1986 / NIES-2087 / MED4) protein is UDP-N-acetylenolpyruvoylglucosamine reductase.